The primary structure comprises 442 residues: Thymidine phosphorylase (442 aa).

Belongs to the thymidine/pyrimidine-nucleoside phosphorylase family. As to quaternary structure, homodimer.

The catalysed reaction is thymidine + phosphate = 2-deoxy-alpha-D-ribose 1-phosphate + thymine. It functions in the pathway pyrimidine metabolism; dTMP biosynthesis via salvage pathway; dTMP from thymine: step 1/2. The enzymes which catalyze the reversible phosphorolysis of pyrimidine nucleosides are involved in the degradation of these compounds and in their utilization as carbon and energy sources, or in the rescue of pyrimidine bases for nucleotide synthesis. In Pectobacterium atrosepticum (strain SCRI 1043 / ATCC BAA-672) (Erwinia carotovora subsp. atroseptica), this protein is Thymidine phosphorylase.